Consider the following 359-residue polypeptide: 3-dehydroquinate synthase (359 aa).

NAD(+) is bound by residues 71 to 76, 105 to 109, 129 to 130, Lys-142, and Lys-151; these read DGEAYK, GVVGD, and TT. Positions 184, 247, and 264 each coordinate Zn(2+).

It belongs to the sugar phosphate cyclases superfamily. Dehydroquinate synthase family. Co(2+) serves as cofactor. The cofactor is Zn(2+). NAD(+) is required as a cofactor.

The protein resides in the cytoplasm. The enzyme catalyses 7-phospho-2-dehydro-3-deoxy-D-arabino-heptonate = 3-dehydroquinate + phosphate. Its pathway is metabolic intermediate biosynthesis; chorismate biosynthesis; chorismate from D-erythrose 4-phosphate and phosphoenolpyruvate: step 2/7. In terms of biological role, catalyzes the conversion of 3-deoxy-D-arabino-heptulosonate 7-phosphate (DAHP) to dehydroquinate (DHQ). This is 3-dehydroquinate synthase from Burkholderia cenocepacia (strain ATCC BAA-245 / DSM 16553 / LMG 16656 / NCTC 13227 / J2315 / CF5610) (Burkholderia cepacia (strain J2315)).